Here is a 211-residue protein sequence, read N- to C-terminus: tRNA (guanine-N(7)-)-methyltransferase (211 aa).

Glu43, Asp68, and Asn117 together coordinate S-adenosyl-L-methionine. Substrate is bound by residues Lys121, Asp153, and 190 to 193 (TEYE).

The protein belongs to the class I-like SAM-binding methyltransferase superfamily. TrmB family.

It catalyses the reaction guanosine(46) in tRNA + S-adenosyl-L-methionine = N(7)-methylguanosine(46) in tRNA + S-adenosyl-L-homocysteine. The protein operates within tRNA modification; N(7)-methylguanine-tRNA biosynthesis. Its function is as follows. Catalyzes the formation of N(7)-methylguanine at position 46 (m7G46) in tRNA. This chain is tRNA (guanine-N(7)-)-methyltransferase, found in Clostridium acetobutylicum (strain ATCC 824 / DSM 792 / JCM 1419 / IAM 19013 / LMG 5710 / NBRC 13948 / NRRL B-527 / VKM B-1787 / 2291 / W).